The chain runs to 172 residues: Adenine phosphoribosyltransferase (172 aa).

Belongs to the purine/pyrimidine phosphoribosyltransferase family. In terms of assembly, homodimer.

It is found in the cytoplasm. The catalysed reaction is AMP + diphosphate = 5-phospho-alpha-D-ribose 1-diphosphate + adenine. The protein operates within purine metabolism; AMP biosynthesis via salvage pathway; AMP from adenine: step 1/1. Functionally, catalyzes a salvage reaction resulting in the formation of AMP, that is energically less costly than de novo synthesis. The protein is Adenine phosphoribosyltransferase of Anaeromyxobacter dehalogenans (strain 2CP-1 / ATCC BAA-258).